A 355-amino-acid chain; its full sequence is Probable zinc transporter 12 (355 aa).

The signal sequence occupies residues 1–25 (MSRFRKTLVSAFVLCLVIFPLLVSA). At 26-50 (AEEENQCGGSKGGSAAEKASALKYK) the chain is on the extracellular side. A helical transmembrane segment spans residues 51 to 71 (IIAFFSILIAGVFGVCLPIFG). The Cytoplasmic portion of the chain corresponds to 72–77 (LKTESN). The chain crosses the membrane as a helical span at residues 78–98 (FFMYVKAFAAGVILATGFVHI). The Extracellular portion of the chain corresponds to 99–116 (LPDATESLTSSCLGEEPP). Residues 117 to 137 (WGDFPMTGLVAMAASILTMLI) traverse the membrane as a helical segment. At 138–200 (ESFASGYLNR…DDDHIDMRKK (63 aa)) the chain is on the cytoplasmic side. The tract at residues 156 to 183 (TLPVSTGGEEEHAHTGSAHTHASQGHSH) is disordered. Residues 201-221 (IVTQILELGIVVHSVIIGISL) form a helical membrane-spanning segment. Residues 222 to 231 (GASPSVSTIK) are Extracellular-facing. A helical membrane pass occupies residues 232–252 (PLIAAITFHQLFEGFGLGGCI). The Cytoplasmic segment spans residues 253–261 (SEAKFRVKK). Residues 262–282 (IWVMLMFFALTAPIGIGIGIG) form a helical membrane-spanning segment. Residues 283–302 (VAEIYNENSPMALKVSGFLN) are Extracellular-facing. Residues 303–323 (ATASGILIYMALVDLVAPLFM) form a helical membrane-spanning segment. Residues 324–334 (NQKTQSSMKIQ) lie on the Cytoplasmic side of the membrane. Residues 335–355 (VACSVSLVVGAGLMSLLAIWA) form a helical membrane-spanning segment.

The protein belongs to the ZIP transporter (TC 2.A.5) family.

It is found in the cell membrane. Functionally, zinc transporter involved in zinc uptake in roots. Targeted by BZIP23 transcription factor in response to zinc-deficient conditions. This Arabidopsis thaliana (Mouse-ear cress) protein is Probable zinc transporter 12 (ZIP12).